The sequence spans 403 residues: MAQSKPVKKIVLAYSGGLDTSVILTWLKETYGCEVIAFTADVGQKEELSGLEEKGIKTGASKVYIQDLRLEFARDFIFPAIQGNALYEMRYLLGTSLARPLIAKAMVEVAEKEGADAFAHGATGKGNDQVRFELGVKSLAPEKTIIAPWRIWNFGGRSDLIEYAKSKGIPVSITVEKPYSMDRNLMHISYEGGILEDPYREPDEKMFLLTTSPEKAPDAPEYLELDFQEGNCVAINGKKLNPYEVMEALNTIAGKHGVGRVDIVENRLVGIKSRGVYETPGGTVLFLAHRDLESITIDRDTQHHKDKLSIEFAELIYNGHWFSSRMKAVRAFITETQRYVTGAVKVKLYKGTCSIVGRKSSVSLYNPKMATFEKEELYNQKDAEGFINIYGLPAQETARLRKK.

Residues 13 to 21 (AYSGGLDTS) and A40 each bind ATP. Positions 91 and 96 each coordinate L-citrulline. G121 is a binding site for ATP. The L-aspartate site is built by T123, N127, and D128. Residue N127 coordinates L-citrulline. L-citrulline is bound by residues R131, S180, S189, E265, and Y277.

The protein belongs to the argininosuccinate synthase family. Type 1 subfamily. Homotetramer.

The protein localises to the cytoplasm. It catalyses the reaction L-citrulline + L-aspartate + ATP = 2-(N(omega)-L-arginino)succinate + AMP + diphosphate + H(+). It functions in the pathway amino-acid biosynthesis; L-arginine biosynthesis; L-arginine from L-ornithine and carbamoyl phosphate: step 2/3. This is Argininosuccinate synthase from Leptospira borgpetersenii serovar Hardjo-bovis (strain JB197).